The primary structure comprises 220 residues: A-type ATP synthase subunit K (220 aa).

6 helical membrane passes run 5–25 (LILG…GSGI), 63–83 (FLVA…AMFA), 90–110 (LAGL…GAVA), 125–145 (LPET…VGVF), 155–175 (AALG…GQGI), and 195–215 (LVLA…AILI).

The protein belongs to the V-ATPase proteolipid subunit family. The A-type ATPase is composed of subunits A(3), B(3), C, D, E(1 or 2), F, H(2), I and K(x). Subunit K dimerizes and may form higher oligomers.

The protein resides in the cell membrane. Component of the A-type ATP synthase that produces ATP from ADP in the presence of a proton gradient across the membrane. The chain is A-type ATP synthase subunit K from Methanocaldococcus jannaschii (strain ATCC 43067 / DSM 2661 / JAL-1 / JCM 10045 / NBRC 100440) (Methanococcus jannaschii).